Consider the following 147-residue polypeptide: Lipoprotein YafY (147 aa).

The first 20 residues, 1–20 (MKRKTLPLLALVATTLFLIA), serve as a signal peptide directing secretion. A lipid anchor (N-palmitoyl cysteine) is attached at C21. The S-diacylglycerol cysteine moiety is linked to residue C21.

To E.coli YfjS.

The protein resides in the cell inner membrane. In terms of biological role, when overproduced strongly induces degP through the activation of the two-component envelope stress response system CpxA/CpxR. The polypeptide is Lipoprotein YafY (yafY) (Escherichia coli (strain K12)).